We begin with the raw amino-acid sequence, 122 residues long: MIQVESTLQVADNSGAKKVACIKVLGGSHRRYATVGDIIMVSVKEAMPHCKVKKGDVMQAVIVRTAKEVRRADGSYIKFDSNAAVLLNKQGEPVGTRIFGPVARELRARNFMKIVSLAPEVL.

This sequence belongs to the universal ribosomal protein uL14 family. Part of the 50S ribosomal subunit. Forms a cluster with proteins L3 and L19. In the 70S ribosome, L14 and L19 interact and together make contacts with the 16S rRNA in bridges B5 and B8.

Functionally, binds to 23S rRNA. Forms part of two intersubunit bridges in the 70S ribosome. The polypeptide is Large ribosomal subunit protein uL14 (Nitratidesulfovibrio vulgaris (strain ATCC 29579 / DSM 644 / CCUG 34227 / NCIMB 8303 / VKM B-1760 / Hildenborough) (Desulfovibrio vulgaris)).